The primary structure comprises 472 residues: MKRFILLFFLSTIAIFKVYSQRLYDNGPLTGDNNYVLQGSKWNKTTLKYYIYNSSSHLTTTERENAIRSAFALWSDKSTLSFIQVYNPNQADIKIKWEKGNHGDGYPFDGNTGILAHAFYPPPAGGNYAGHLHFDGDENWSINGSGIDLITVAAHEIGHLLGIEHSNVSSALMYPYYTGIKRQLDNDDCLAVWDLYGYPFSISGPSSVCDQATYTVENLLSGATVQWSVSNPNIATINSSNGVLTCRGNGICEVRATINNSSVALTPLKICLGTPISQDITLTVESLNSNGTLCTDNPNAIMADHPGGNHLGYIREYEWRISNGWQIAHHPGDNGIYADHFIVTVIPLSPLPGSPTVSVRARSECGWGTWKEVQIPAVSCSRTISPFTLSPNPATDEVILQLMETDEVSGLSVLSTDRSAYEIQIWSGMRMLRSFRTNEPTFQISMTGLPAGLYFVRVVKNGQTYTQKLIKK.

The signal sequence occupies residues 1–20 (MKRFILLFFLSTIAIFKVYS). The propeptide at 21-34 (QRLYDNGPLTGDNN) is activation peptide. His-102, Asp-104, His-117, His-133, and His-155 together coordinate Zn(2+). The active-site Proton donor/acceptor is Glu-156. His-159 and His-165 together coordinate Zn(2+). The propeptide at 196-386 (YGYPFSISGP…AVSCSRTISP (191 aa)) is removed in short form. Positions 387–472 (FTLSPNPATD…QTYTQKLIKK (86 aa)) are cleaved as a propeptide — removed in long form.

This sequence belongs to the peptidase M10A family. It depends on Zn(2+) as a cofactor. Processes itself into the mature 18-kDa enzyme (Kly18) through sequential autoproteolytic cleavage at both the N- and C-termini. However, the maturation intermediate Kly38 is found to be more active than Kly18 and the rate for its processing is slow, which raises the question as to whether Kly38 is a physiologically relevant entity.

It is found in the secreted. Its activity is regulated as follows. Autoprocessing and proteolytic activity are completely inhibited by EDTA and 1,10-phenanthroline in vitro. Proteolytic activity is 3-fold enhanced by Ca(2+) due to stabilization of the protein structure but inhibited by an excess of Zn(2+). Inhibitory studies of karilysin identified several phage display-selected peptides with apparent inhibition constants (Ki) in the micromolar range, among which is the tetrapeptide SWFP (Ki=10.7 uM). Metalloprotease able to cleave casein, gelatin, elastin, fibrinogen and fibronectin. Shows exclusive preference for hydrophobic residues, especially Leu, Tyr and Met, at the P1' position of substrates, and for Pro or Ala at P3. Can efficiently cleave the antimicrobial peptide LL-37 which is a component of the immune system, leading to a significant reduction of its bactericidal activity. Is also able to inhibit all pathways of the human complement system. The classical and lectin complement pathways are inhibited because of the efficient degradation of mannose-binding lectin, ficolin-2, ficolin-3, and C4 by karilysin, whereas inhibition of the terminal pathway is caused by cleavage of C5. Thus, karilysin appears to be a major virulence factor of T.forsythia that contributes to evasion of the human immune response and periodontal disease. Seems to act synergistically with gingipains from the periodontal pathogen P.gingivalis present at the same sites of infection. The sequence is that of Karilysin (kly) from Tannerella forsythia (strain ATCC 43037 / JCM 10827 / CCUG 21028 A / KCTC 5666 / FDC 338) (Bacteroides forsythus).